We begin with the raw amino-acid sequence, 660 residues long: Macrolide export ATP-binding/permease protein MacB (660 aa).

One can recognise an ABC transporter domain in the interval 10-248 (LVLENIVRKF…AKGQALQGKQ (239 aa)). 46-53 (GASGSGKS) serves as a coordination point for ATP. A run of 4 helical transmembrane segments spans residues 285–305 (FLTMLGVIIGIAAIIAMVALG), 532–552 (ILTLLVSSIAAISLIVGGIGV), 593–613 (IIGGGVGILFGLSIGGLFVLF), and 625–645 (SIIISLTFSTLIGICFGFSPA).

This sequence belongs to the ABC transporter superfamily. Macrolide exporter (TC 3.A.1.122) family. Homodimer.

It localises to the cell inner membrane. Functionally, non-canonical ABC transporter that contains transmembrane domains (TMD), which form a pore in the inner membrane, and an ATP-binding domain (NBD), which is responsible for energy generation. Confers resistance against macrolides. In Bartonella quintana (strain Toulouse) (Rochalimaea quintana), this protein is Macrolide export ATP-binding/permease protein MacB.